A 178-amino-acid polypeptide reads, in one-letter code: CDP-archaeol synthase (178 aa).

5 helical membrane passes run 7–27 (LFVS…ACIF), 56–76 (FFGV…SNLG), 91–111 (VIIG…GSFL), 125–145 (VLDQ…YYLV), and 149–169 (ISIT…IIAY).

The protein belongs to the CDP-archaeol synthase family. The cofactor is Mg(2+).

Its subcellular location is the cell membrane. The enzyme catalyses 2,3-bis-O-(geranylgeranyl)-sn-glycerol 1-phosphate + CTP + H(+) = CDP-2,3-bis-O-(geranylgeranyl)-sn-glycerol + diphosphate. It participates in membrane lipid metabolism; glycerophospholipid metabolism. In terms of biological role, catalyzes the formation of CDP-2,3-bis-(O-geranylgeranyl)-sn-glycerol (CDP-archaeol) from 2,3-bis-(O-geranylgeranyl)-sn-glycerol 1-phosphate (DGGGP) and CTP. This reaction is the third ether-bond-formation step in the biosynthesis of archaeal membrane lipids. The protein is CDP-archaeol synthase of Methanococcus vannielii (strain ATCC 35089 / DSM 1224 / JCM 13029 / OCM 148 / SB).